The primary structure comprises 232 residues: Large ribosomal subunit protein uL1 (232 aa).

Belongs to the universal ribosomal protein uL1 family. In terms of assembly, part of the 50S ribosomal subunit.

Binds directly to 23S rRNA. The L1 stalk is quite mobile in the ribosome, and is involved in E site tRNA release. In terms of biological role, protein L1 is also a translational repressor protein, it controls the translation of the L11 operon by binding to its mRNA. This is Large ribosomal subunit protein uL1 from Chlamydia trachomatis serovar L2 (strain ATCC VR-902B / DSM 19102 / 434/Bu).